A 158-amino-acid polypeptide reads, in one-letter code: uncharacterized protein (158 aa).

A signal peptide spans 1 to 16 (MFRPILILTILSCVLA). The N-linked (GlcNAc...) asparagine glycan is linked to N122.

This is an uncharacterized protein from Caenorhabditis elegans.